A 251-amino-acid polypeptide reads, in one-letter code: Imidazole glycerol phosphate synthase subunit HisF (251 aa).

Active-site residues include aspartate 11 and aspartate 130.

It belongs to the HisA/HisF family. Heterodimer of HisH and HisF.

It is found in the cytoplasm. It catalyses the reaction 5-[(5-phospho-1-deoxy-D-ribulos-1-ylimino)methylamino]-1-(5-phospho-beta-D-ribosyl)imidazole-4-carboxamide + L-glutamine = D-erythro-1-(imidazol-4-yl)glycerol 3-phosphate + 5-amino-1-(5-phospho-beta-D-ribosyl)imidazole-4-carboxamide + L-glutamate + H(+). It functions in the pathway amino-acid biosynthesis; L-histidine biosynthesis; L-histidine from 5-phospho-alpha-D-ribose 1-diphosphate: step 5/9. Functionally, IGPS catalyzes the conversion of PRFAR and glutamine to IGP, AICAR and glutamate. The HisF subunit catalyzes the cyclization activity that produces IGP and AICAR from PRFAR using the ammonia provided by the HisH subunit. In Phocaeicola vulgatus (strain ATCC 8482 / DSM 1447 / JCM 5826 / CCUG 4940 / NBRC 14291 / NCTC 11154) (Bacteroides vulgatus), this protein is Imidazole glycerol phosphate synthase subunit HisF.